The sequence spans 355 residues: Serpentine receptor class epsilon-1 (355 aa).

The next 7 membrane-spanning stretches (helical) occupy residues 28-48, 56-76, 102-122, 144-164, 172-192, 232-252, and 268-288; these read FELL…YATI, LNFI…GRFI, ILSS…SLAV, ISLF…IVML, VMAF…LVLF, VVLF…MYMS, and FAFN…IIFS.

This sequence belongs to the nematode receptor-like protein sre family.

Its subcellular location is the membrane. The sequence is that of Serpentine receptor class epsilon-1 (sre-1) from Caenorhabditis elegans.